Here is a 90-residue protein sequence, read N- to C-terminus: Small ribosomal subunit protein uS15 (90 aa).

It belongs to the universal ribosomal protein uS15 family. As to quaternary structure, part of the 30S ribosomal subunit. Forms a bridge to the 50S subunit in the 70S ribosome, contacting the 23S rRNA.

Functionally, one of the primary rRNA binding proteins, it binds directly to 16S rRNA where it helps nucleate assembly of the platform of the 30S subunit by binding and bridging several RNA helices of the 16S rRNA. Its function is as follows. Forms an intersubunit bridge (bridge B4) with the 23S rRNA of the 50S subunit in the ribosome. The chain is Small ribosomal subunit protein uS15 from Thermotoga maritima (strain ATCC 43589 / DSM 3109 / JCM 10099 / NBRC 100826 / MSB8).